We begin with the raw amino-acid sequence, 504 residues long: Sodium-coupled neutral amino acid transporter 3 (504 aa).

Serine 52 is subject to Phosphoserine; by PKC. Residue asparagine 73 is glycosylated (N-linked (GlcNAc...) asparagine). 5 helical membrane passes run glycine 82–leucine 102, valine 105–isoleucine 125, alanine 143–isoleucine 163, methionine 186–methionine 206, and leucine 212–tyrosine 232. The cysteines at positions 239 and 275 are disulfide-linked. Residues asparagine 247 and asparagine 251 are each glycosylated (N-linked (GlcNAc...) asparagine). A helical transmembrane segment spans residues alanine 287 to tyrosine 307. Residue asparagine 323 is glycosylated (N-linked (GlcNAc...) asparagine). 5 consecutive transmembrane segments (helical) span residues leucine 324–phenylalanine 344, isoleucine 366–phenylalanine 386, valine 408–isoleucine 428, isoleucine 431–phenylalanine 451, and isoleucine 469–isoleucine 489.

Belongs to the amino acid/polyamine transporter 2 family. Post-translationally, phosphorylation at Ser-52 induces internalization and sequestration into an intracellular reservoir. During dephosphorylation by protein phosphatases, can recycle back to the plasma membrane and regain activity. Prolonged phosphorylation results in its degradation. In terms of tissue distribution, highly expressed in liver. Expressed in skeletal muscle. Expressed in kidney, heart and brain. Not detected in gut, lung or spleen. Expressed ubiquitously in hepatocytes in liver whereas in kidney expression is restricted to the medulla. Within brain, expressed in glial cells. In the cerebellum, expressed on Bergmann glial fibers in the molecular layer and astrocytes in the granule layer. Expressed in brain kidney and liver (at protein level). In the adult kidney, highly expressed in the outer strip of the outer medulla and medullary rays penetrating into the kidney cortex (at protein level).

The protein localises to the cell membrane. It localises to the basolateral cell membrane. The enzyme catalyses L-glutamine(out) + Na(+)(out) + H(+)(in) = L-glutamine(in) + Na(+)(in) + H(+)(out). It carries out the reaction L-asparagine(out) + Na(+)(out) + H(+)(in) = L-asparagine(in) + Na(+)(in) + H(+)(out). The catalysed reaction is L-histidine(out) + Na(+)(out) + H(+)(in) = L-histidine(in) + Na(+)(in) + H(+)(out). L-glutamine efflux and L-glutamine uptake are regulated by CO2/HCO3(-) through SLC4A4 leading to modulation of cytosolic pH and Na(+)concentration. In terms of biological role, symporter that cotransports specific neutral amino acids and sodium ions, coupled to an H(+) antiporter activity. Mainly participates in the glutamate-GABA-glutamine cycle in brain where it transports L-glutamine from astrocytes in the intercellular space for the replenishment of both neurotransmitters glutamate and gamma-aminobutyric acid (GABA) in neurons. Also functions as the major influx transporter in ganglion cells mediating the uptake of glutamine. The transport activity is specific for L-glutamine, L-histidine and L-asparagine. The transport is electroneutral coupled to the cotransport of 1 Na(+) and the antiport of 1 H(+), pH dependent, saturable, Li(+) tolerant and functions in both direction depending on the concentration gradients of its substrates and cotransported ions. Also mediates an amino acid-gated H(+) conductance that is not stoichiometrically coupled to the amino acid transport but which influences the ionic gradients that drive the amino acid transport. In addition, may play a role in nitrogen metabolism, amino acid homeostasis, glucose metabolism and renal ammoniagenesis. This is Sodium-coupled neutral amino acid transporter 3 from Rattus norvegicus (Rat).